The primary structure comprises 184 residues: ATP synthase subunit b 1 (184 aa).

A helical transmembrane segment spans residues 4-24 (LSILAVLAASPAMAATGPFLS).

It belongs to the ATPase B chain family. F-type ATPases have 2 components, F(1) - the catalytic core - and F(0) - the membrane proton channel. F(1) has five subunits: alpha(3), beta(3), gamma(1), delta(1), epsilon(1). F(0) has three main subunits: a(1), b(2) and c(10-14). The alpha and beta chains form an alternating ring which encloses part of the gamma chain. F(1) is attached to F(0) by a central stalk formed by the gamma and epsilon chains, while a peripheral stalk is formed by the delta and b chains.

It localises to the cell inner membrane. F(1)F(0) ATP synthase produces ATP from ADP in the presence of a proton or sodium gradient. F-type ATPases consist of two structural domains, F(1) containing the extramembraneous catalytic core and F(0) containing the membrane proton channel, linked together by a central stalk and a peripheral stalk. During catalysis, ATP synthesis in the catalytic domain of F(1) is coupled via a rotary mechanism of the central stalk subunits to proton translocation. Its function is as follows. Component of the F(0) channel, it forms part of the peripheral stalk, linking F(1) to F(0). This chain is ATP synthase subunit b 1, found in Cereibacter sphaeroides (strain ATCC 17023 / DSM 158 / JCM 6121 / CCUG 31486 / LMG 2827 / NBRC 12203 / NCIMB 8253 / ATH 2.4.1.) (Rhodobacter sphaeroides).